The following is a 30-amino-acid chain: Bacteriocin SRCAM 37 (30 aa).

It belongs to the bacteriocin class IIA/YGNGV family.

The protein resides in the secreted. Bacteriocin with antibacterial activity against C.jejuni. In Paenibacillus polymyxa (Bacillus polymyxa), this protein is Bacteriocin SRCAM 37.